The following is a 365-amino-acid chain: Transmembrane protein 25 (365 aa).

An N-terminal signal peptide occupies residues 1–26; the sequence is MELPLSQATLRHTLLLLPALLSSGQG. The Extracellular segment spans residues 27–232; sequence ELAPQIDGQT…APGLLATRIE (206 aa). The region spanning 30–123 is the Ig-like domain; it reads PQIDGQTWAE…SGRPANASVI (94 aa). The cysteines at positions 52 and 107 are disulfide-linked. Asparagine 106, asparagine 162, asparagine 192, and asparagine 205 each carry an N-linked (GlcNAc...) asparagine glycan. The chain crosses the membrane as a helical span at residues 233 to 253; the sequence is VPLLGIVVAGGLALGTLVGFS. Residues 254–365 lie on the Cytoplasmic side of the membrane; that stretch reads TLVACLVCRK…SSVSSDEIWL (112 aa).

As to quaternary structure, interacts with GRIN2B. Expressed throughout the brain with higher levels within the hippocampus.

The protein resides in the late endosome. Its subcellular location is the lysosome. It is found in the cell membrane. The protein localises to the secreted. Functionally, in neurons, modulates the degradation of NMDA receptor GRIN2B subunit. Plays a role in the regulation of neuronal excitability. The chain is Transmembrane protein 25 from Mus musculus (Mouse).